Here is a 160-residue protein sequence, read N- to C-terminus: Cytochrome b6-f complex subunit 4 (160 aa).

3 helical membrane passes run 36–56 (LLYIFPVVILGTIACIVGLAV), 95–115 (LLGIALQTLVPLGLMLVPFIE), and 131–151 (TVFLFGTVTTIYLGIGAALPI).

The protein belongs to the cytochrome b family. PetD subfamily. In terms of assembly, the 4 large subunits of the cytochrome b6-f complex are cytochrome b6, subunit IV (17 kDa polypeptide, PetD), cytochrome f and the Rieske protein, while the 4 small subunits are PetG, PetL, PetM and PetN. The complex functions as a dimer.

The protein localises to the cellular thylakoid membrane. Functionally, component of the cytochrome b6-f complex, which mediates electron transfer between photosystem II (PSII) and photosystem I (PSI), cyclic electron flow around PSI, and state transitions. The polypeptide is Cytochrome b6-f complex subunit 4 (Parasynechococcus marenigrum (strain WH8102)).